Consider the following 346-residue polypeptide: tRNA N6-adenosine threonylcarbamoyltransferase (346 aa).

Residues histidine 111 and histidine 115 each contribute to the Fe cation site. Residues 134–138 (LVSGG), aspartate 167, glycine 180, and asparagine 277 contribute to the substrate site. Aspartate 305 contributes to the Fe cation binding site.

Belongs to the KAE1 / TsaD family. Requires Fe(2+) as cofactor.

It localises to the cytoplasm. The enzyme catalyses L-threonylcarbamoyladenylate + adenosine(37) in tRNA = N(6)-L-threonylcarbamoyladenosine(37) in tRNA + AMP + H(+). Functionally, required for the formation of a threonylcarbamoyl group on adenosine at position 37 (t(6)A37) in tRNAs that read codons beginning with adenine. Is involved in the transfer of the threonylcarbamoyl moiety of threonylcarbamoyl-AMP (TC-AMP) to the N6 group of A37, together with TsaE and TsaB. TsaD likely plays a direct catalytic role in this reaction. The sequence is that of tRNA N6-adenosine threonylcarbamoyltransferase from Bordetella parapertussis (strain 12822 / ATCC BAA-587 / NCTC 13253).